We begin with the raw amino-acid sequence, 209 residues long: Ribosomal RNA large subunit methyltransferase E (209 aa).

Residues G63, W65, D83, D99, and D124 each coordinate S-adenosyl-L-methionine. K164 functions as the Proton acceptor in the catalytic mechanism.

Belongs to the class I-like SAM-binding methyltransferase superfamily. RNA methyltransferase RlmE family.

The protein resides in the cytoplasm. It carries out the reaction uridine(2552) in 23S rRNA + S-adenosyl-L-methionine = 2'-O-methyluridine(2552) in 23S rRNA + S-adenosyl-L-homocysteine + H(+). Its function is as follows. Specifically methylates the uridine in position 2552 of 23S rRNA at the 2'-O position of the ribose in the fully assembled 50S ribosomal subunit. The protein is Ribosomal RNA large subunit methyltransferase E of Shewanella frigidimarina (strain NCIMB 400).